The following is a 501-amino-acid chain: Pyruvate kinase (501 aa).

Arg50 is a binding site for substrate. The K(+) site is built by Asn52, Ser54, Asp85, and Thr86. 52 to 55 contacts ATP; that stretch reads NFSH. The ATP site is built by Arg92 and Lys178. Residue Glu243 participates in Mg(2+) binding. Residues Gly266, Asp267, and Thr299 each contribute to the substrate site. Asp267 is a Mg(2+) binding site.

Belongs to the pyruvate kinase family. In terms of assembly, homotetramer. Mg(2+) serves as cofactor. It depends on K(+) as a cofactor.

The enzyme catalyses pyruvate + ATP = phosphoenolpyruvate + ADP + H(+). The protein operates within carbohydrate degradation; glycolysis; pyruvate from D-glyceraldehyde 3-phosphate: step 5/5. The polypeptide is Pyruvate kinase (PYK1) (Lachancea kluyveri (strain ATCC 58438 / CBS 3082 / BCRC 21498 / NBRC 1685 / JCM 7257 / NCYC 543 / NRRL Y-12651) (Yeast)).